The following is a 120-amino-acid chain: Large ribosomal subunit protein uL18 (120 aa).

This sequence belongs to the universal ribosomal protein uL18 family. Part of the 50S ribosomal subunit; part of the 5S rRNA/L5/L18/L25 subcomplex. Contacts the 5S and 23S rRNAs.

Its function is as follows. This is one of the proteins that bind and probably mediate the attachment of the 5S RNA into the large ribosomal subunit, where it forms part of the central protuberance. This is Large ribosomal subunit protein uL18 from Paramagnetospirillum magneticum (strain ATCC 700264 / AMB-1) (Magnetospirillum magneticum).